Consider the following 341-residue polypeptide: MSFPYSLKPFNTFGVEQSCLSLIEVHSKAELQSACLSLYQSKRPMLVLGGGSNIVFTDDFNGTVVRVLSKGISCSEDDTHFYLAVEAGENWHELVQFSLNQNMPGLENLALIPGTVGAAPIQNIGAYGVELCDICDWVEYLDLASGNLLRLTVDECEFAYRESIFKGSLRDKAVITAVGLRLPKAWQPKLAYGPLQSFTAETVTPREIFDRVCEVRSEKLPNPEVLGNAGSFFKNPIVSAATYMQLAARFPSIVGYAQPNGEVKLAAGWLIEHAGLKGFALGNAGVHAKQALVLVNLGHATGQDICRLALHVITRVNEVFGVKLEAEPRIMGLTGETSLDV.

The 171-residue stretch at 15–185 (VEQSCLSLIE…TAVGLRLPKA (171 aa)) folds into the FAD-binding PCMH-type domain. The active site involves arginine 161. Serine 231 (proton donor) is an active-site residue. Glutamate 327 is an active-site residue.

This sequence belongs to the MurB family. FAD is required as a cofactor.

The protein localises to the cytoplasm. The enzyme catalyses UDP-N-acetyl-alpha-D-muramate + NADP(+) = UDP-N-acetyl-3-O-(1-carboxyvinyl)-alpha-D-glucosamine + NADPH + H(+). Its pathway is cell wall biogenesis; peptidoglycan biosynthesis. Cell wall formation. This is UDP-N-acetylenolpyruvoylglucosamine reductase from Shewanella sp. (strain ANA-3).